A 183-amino-acid polypeptide reads, in one-letter code: Apo-citrate lyase phosphoribosyl-dephospho-CoA transferase (183 aa).

This sequence belongs to the CitX family.

The enzyme catalyses apo-[citrate lyase ACP] + 2'-(5''-triphospho-alpha-D-ribosyl)-3'-dephospho-CoA = holo-[citrate lyase ACP] + diphosphate. Its function is as follows. Transfers 2-(5''-triphosphoribosyl)-3'-dephosphocoenzyme-A on a serine residue to the apo-acyl carrier protein (gamma chain) of the citrate lyase to yield holo-acyl carrier protein. The chain is Apo-citrate lyase phosphoribosyl-dephospho-CoA transferase from Escherichia coli O45:K1 (strain S88 / ExPEC).